A 491-amino-acid chain; its full sequence is UDP-N-acetylmuramate--L-alanine ligase (491 aa).

Residue 126–132 coordinates ATP; it reads GTHGKTT.

It belongs to the MurCDEF family.

The protein localises to the cytoplasm. The catalysed reaction is UDP-N-acetyl-alpha-D-muramate + L-alanine + ATP = UDP-N-acetyl-alpha-D-muramoyl-L-alanine + ADP + phosphate + H(+). It participates in cell wall biogenesis; peptidoglycan biosynthesis. Its function is as follows. Cell wall formation. The polypeptide is UDP-N-acetylmuramate--L-alanine ligase (Salmonella agona (strain SL483)).